The primary structure comprises 542 residues: Glucans biosynthesis protein G (542 aa).

An N-terminal signal peptide occupies residues 1-34; the sequence is MVSLLRCPSSKPYSSLICSLTLGAVVALSGVAYA.

It belongs to the OpgD/OpgG family.

The protein resides in the periplasm. It functions in the pathway glycan metabolism; osmoregulated periplasmic glucan (OPG) biosynthesis. Involved in the biosynthesis of osmoregulated periplasmic glucans (OPGs). This is Glucans biosynthesis protein G from Shewanella baltica (strain OS223).